Here is a 655-residue protein sequence, read N- to C-terminus: Polycyclic ketone monooxygenase (655 aa).

FAD-binding residues include Gly-89, Asp-113, Ala-114, Thr-121, Trp-124, Cys-132, Asp-133, Tyr-139, and Val-183. Residues Thr-277, Thr-280, Thr-301, Lys-425, and Val-452 each contribute to the NADPH site. Cys-424 and Cys-596 are oxidised to a cystine. FAD is bound by residues Thr-492 and Asn-541. Position 600 (Tyr-600) interacts with NADPH.

The protein belongs to the FAD-binding monooxygenase family. FAD is required as a cofactor.

In terms of biological role, polycyclic ketone monooxygenase (PockeMO) that displays excellent enantioselectivity, acts on various ketones, and is particularly active on polycyclic molecules. Breaks C-C bonds through the insertion of a single oxygen atom adjacent to a carbonyl moiety, yielding esters or lactones from ketones. PockeMO is able to convert linear ketones (including cyclohexane and to a lesser extend 4-octanone), cyclic ketones (including cyclohexanone and cyclooctanone), bicyclic ketones and polycyclic ketones (steroids). Performs oxidation of the keto functionalities at both the A and D rings of steroids. Particularly, oxidizes the A ring of stanolone or pregnenolone. Selectively oxidizes the D ring of androstenedione or androstadienedione, steroids with keto groups in both the A and D rings, to yield the pharmaceutically relevant testo(lo)lactone. This is Polycyclic ketone monooxygenase from Thermothelomyces thermophilus (strain ATCC 42464 / BCRC 31852 / DSM 1799) (Sporotrichum thermophile).